Here is a 219-residue protein sequence, read N- to C-terminus: 3-dehydroquinate dehydratase (219 aa).

Residues 34-36 (ELR) and arginine 63 contribute to the 3-dehydroquinate site. Histidine 114 functions as the Proton donor/acceptor in the catalytic mechanism. The active-site Schiff-base intermediate with substrate is the lysine 139. 3-dehydroquinate is bound by residues arginine 174, threonine 193, and glutamine 197.

Belongs to the type-I 3-dehydroquinase family. Homodimer.

The enzyme catalyses 3-dehydroquinate = 3-dehydroshikimate + H2O. Its pathway is metabolic intermediate biosynthesis; chorismate biosynthesis; chorismate from D-erythrose 4-phosphate and phosphoenolpyruvate: step 3/7. Involved in the third step of the chorismate pathway, which leads to the biosynthesis of aromatic amino acids. Catalyzes the cis-dehydration of 3-dehydroquinate (DHQ) and introduces the first double bond of the aromatic ring to yield 3-dehydroshikimate. The sequence is that of 3-dehydroquinate dehydratase from Sulfolobus acidocaldarius (strain ATCC 33909 / DSM 639 / JCM 8929 / NBRC 15157 / NCIMB 11770).